A 384-amino-acid polypeptide reads, in one-letter code: V-type proton ATPase subunit C 2 (384 aa).

It belongs to the V-ATPase C subunit family. As to quaternary structure, V-ATPase is a heteromultimeric enzyme made up of two complexes: the ATP-hydrolytic V1 complex and the proton translocation V0 complex. The V1 complex consists of three catalytic AB heterodimers that form a heterohexamer, three peripheral stalks each consisting of EG heterodimers, one central rotor including subunits D and F, and the regulatory subunits C and H. The proton translocation complex V0 consists of the proton transport subunit a, a ring of proteolipid subunits c9c'', rotary subunit d, subunits e and f, and the accessory subunits vah-19/Ac45 and vah-20/PRR.

Its function is as follows. Subunit of the V1 complex of vacuolar(H+)-ATPase (V-ATPase), a multisubunit enzyme composed of a peripheral complex (V1) that hydrolyzes ATP and a membrane integral complex (V0) that translocates protons. V-ATPase is responsible for acidifying and maintaining the pH of intracellular compartments and in some cell types, is targeted to the plasma membrane, where it is responsible for acidifying the extracellular environment. Subunit C is necessary for the assembly of the catalytic sector of the enzyme and is likely to have a specific function in its catalytic activity. The chain is V-type proton ATPase subunit C 2 (VATC) from Ascidia sydneiensis samea (Vanadium-rich ascidian).